The sequence spans 872 residues: Alanine--tRNA ligase (872 aa).

Zn(2+) is bound by residues His566, His570, Cys668, and His672.

It belongs to the class-II aminoacyl-tRNA synthetase family. The cofactor is Zn(2+).

The protein localises to the cytoplasm. The enzyme catalyses tRNA(Ala) + L-alanine + ATP = L-alanyl-tRNA(Ala) + AMP + diphosphate. Functionally, catalyzes the attachment of alanine to tRNA(Ala) in a two-step reaction: alanine is first activated by ATP to form Ala-AMP and then transferred to the acceptor end of tRNA(Ala). Also edits incorrectly charged Ser-tRNA(Ala) and Gly-tRNA(Ala) via its editing domain. The chain is Alanine--tRNA ligase from Lactococcus lactis subsp. cremoris (strain SK11).